Reading from the N-terminus, the 376-residue chain is Putative F-box protein At3g18330 (376 aa).

The F-box domain occupies 1-46 (MPMPNLPKELVEEILSFVPATYLKRLSATCKPWNRLIHNDKRFARK).

In Arabidopsis thaliana (Mouse-ear cress), this protein is Putative F-box protein At3g18330.